The chain runs to 224 residues: Transcription factor HEC3 (224 aa).

Disordered stretches follow at residues 22–42 and 68–88; these read SSNN…DPIG and SLTT…EEEP. Over residues 28–37 the composition is skewed to basic and acidic residues; it reads KNDDHHHQHN. The span at 68–77 shows a compositional bias: low complexity; sequence SLTTTTLLSG. Residues 78 to 88 show a composition bias toward acidic residues; sequence DQEDDEDEEEP. The bHLH domain maps to 125 to 174; it reads ISDDPQSVAARHRRERISERIRILQRLVPGGTKMDTASMLDEAIRYVKFL. A disordered region spans residues 183–224; it reads NNTGYTPPPPQDQASQAVTTSWVSPPPPPSFGRGGRGVGELI. The segment covering 194 to 204 has biased composition (polar residues); it reads DQASQAVTTSW. Positions 214–224 are enriched in gly residues; sequence GRGGRGVGELI.

As to quaternary structure, homodimer. Interacts with SPT. As to expression, gynoecium.

The protein resides in the nucleus. Required for the female reproductive tract development and fertility. This Arabidopsis thaliana (Mouse-ear cress) protein is Transcription factor HEC3 (HEC3).